A 1893-amino-acid chain; its full sequence is Nestin (1893 aa).

M1 is modified (N-acetylmethionine). The segment at 1 to 7 (MEGCVGE) is head. Residues 8-43 (ESFQMWELNRRLEAYLTRVKTLEEQNQLLSAELGGL) form a coil 1A region. One can recognise an IF rod domain in the interval 8-314 (ESFQMWELNR…TLLEAENSRL (307 aa)). Residues 44–55 (RAQSGDTSWRAR) form a linker 1 region. The tract at residues 56–151 (ADDELASLRI…AAHEEERAHL (96 aa)) is coil 1B. A disordered region spans residues 150–172 (HLNAQAACAPRRPPAPPHGSPVR). The interval 152-174 (NAQAACAPRRPPAPPHGSPVRAP) is linker 12. Positions 175-193 (EVEDLARRLGEVWRGAVRD) are coil 2A. Residues 194 to 196 (YQE) form a linker 2 region. The interval 197–314 (RVAHMESSLG…TLLEAENSRL (118 aa)) is coil 2B. At S312 the chain carries Phosphoserine. The tract at residues 315-1893 (QTPGRGSQAS…DGDSWSSGED (1579 aa)) is tail. Position 316 is a phosphothreonine (T316). Phosphoserine occurs at positions 356 and 359. Residue T389 is modified to Phosphothreonine. 3 disordered regions span residues 437 to 479 (PELE…SGSR), 507 to 529 (NSSA…SQGP), and 556 to 879 (KENC…NQKS). A compositionally biased stretch (polar residues) spans 507 to 517 (NSSAQKTQESG). S562 carries the post-translational modification Phosphoserine. 2 stretches are compositionally biased toward basic and acidic residues: residues 572 to 595 (GPEK…EKTL) and 606 to 615 (LGKEDTRTED). S620 is modified (phosphoserine). 2 stretches are compositionally biased toward basic and acidic residues: residues 634 to 646 (ESQE…KEGN) and 670 to 681 (MLERLVEKEDQS). S685 and S729 each carry phosphoserine. Composition is skewed to basic and acidic residues over residues 717–730 (RLIE…LRSP), 761–774 (RLIE…LRSA), 802–818 (ILER…LRSP), and 846–879 (MLER…NQKS). S817 carries the post-translational modification Phosphoserine. S903 is subject to Phosphoserine. 2 stretches are compositionally biased toward basic and acidic residues: residues 949 to 966 (LLED…DRNG) and 989 to 1051 (QRIV…KSLE). The segment at 949-1130 (LLEDKTHKSL…ARSLGKENQE (182 aa)) is disordered. Phosphoserine occurs at positions 1005 and 1049. A Glycyl lysine isopeptide (Lys-Gly) (interchain with G-Cter in SUMO1); alternate cross-link involves residue K1136. A Glycyl lysine isopeptide (Lys-Gly) (interchain with G-Cter in SUMO2); alternate cross-link involves residue K1136. Residues S1145 and S1166 each carry the phosphoserine modification. A disordered region spans residues 1155 to 1222 (ETAEEDLERR…ELSSLGKWNV (68 aa)). Over residues 1198–1212 (DENRETLTSLEKESQ) the composition is skewed to basic and acidic residues. Phosphoserine occurs at positions 1216 and 1229. A disordered region spans residues 1237–1263 (EGLQEEQHQESLREVKQELPSSGNQQR). Basic and acidic residues predominate over residues 1241–1253 (EEQHQESLREVKQ). S1322 is subject to Phosphoserine. Disordered stretches follow at residues 1336 to 1369 (DNLE…EQDS) and 1388 to 1824 (EVVG…SEQV). 2 stretches are compositionally biased toward basic and acidic residues: residues 1354 to 1363 (VTERDEDRAQ) and 1393 to 1403 (EDPRHFAREEA). 2 stretches are compositionally biased toward acidic residues: residues 1458–1469 (ESMEGWEEEEAS) and 1561–1576 (QDWE…DDLG). Residues S1570, S1594, S1686, S1695, S1772, and S1774 each carry the phosphoserine modification. Residues 1688–1709 (GFADEEESGEEGEEEDADEEGA) show a composition bias toward acidic residues. Over residues 1773 to 1788 (GSEESESASLEGEEGQ) the composition is skewed to acidic residues. Over residues 1815–1824 (QSPNLDSEQV) the composition is skewed to polar residues. Residues S1866, S1889, and S1890 each carry the phosphoserine modification. The tract at residues 1870 to 1893 (LGPSQPLKFTLSGVDGDSWSSGED) is disordered.

It belongs to the intermediate filament family. Forms homodimers and homotetramers in vitro. In mixtures with other intermediate filament proteins such as vimentin and alpha-internexin, this protein preferentially forms heterodimers which can assemble to form intermediate filaments if nestin does not exceed 25%. Interacts with FHOD3. Post-translationally, constitutively phosphorylated. This increases during mitosis when the cytoplasmic intermediate filament network is reorganized. In terms of tissue distribution, CNS stem cells.

In terms of biological role, required for brain and eye development. Promotes the disassembly of phosphorylated vimentin intermediate filaments (IF) during mitosis and may play a role in the trafficking and distribution of IF proteins and other cellular factors to daughter cells during progenitor cell division. Required for survival, renewal and mitogen-stimulated proliferation of neural progenitor cells. The chain is Nestin (Nes) from Rattus norvegicus (Rat).